The primary structure comprises 128 residues: Large ribosomal subunit protein bL12 (128 aa).

Belongs to the bacterial ribosomal protein bL12 family. Homodimer. Part of the ribosomal stalk of the 50S ribosomal subunit. Forms a multimeric L10(L12)X complex, where L10 forms an elongated spine to which 2 to 4 L12 dimers bind in a sequential fashion. Binds GTP-bound translation factors.

In terms of biological role, forms part of the ribosomal stalk which helps the ribosome interact with GTP-bound translation factors. Is thus essential for accurate translation. The protein is Large ribosomal subunit protein bL12 of Corynebacterium jeikeium (strain K411).